A 291-amino-acid polypeptide reads, in one-letter code: Pituitary-specific positive transcription factor 1 (291 aa).

A 9aaTAD motif is present at residues Ala-5–Ile-13. One can recognise a POU-specific domain in the interval Met-124–Glu-198. The homeobox DNA-binding region spans Lys-214–Lys-273.

The protein belongs to the POU transcription factor family. Class-1 subfamily. As to quaternary structure, interacts with PITX1. Interacts with LHX3. Interacts with ELK1.

It localises to the nucleus. Its function is as follows. Transcription factor involved in the specification of the lactotrope, somatotrope, and thyrotrope phenotypes in the developing anterior pituitary. Specifically binds to the consensus sequence 5'-TAAAT-3'. Activates growth hormone and prolactin genes. In Homo sapiens (Human), this protein is Pituitary-specific positive transcription factor 1 (POU1F1).